The primary structure comprises 360 residues: Cannabinoid receptor 2 (360 aa).

Residues 1-33 (MAGCRELELTNGSNGGLEFNPMKEYMILSDAQQ) are Extracellular-facing. Asparagine 11 is a glycosylation site (N-linked (GlcNAc...) asparagine). The helical transmembrane segment at 34 to 59 (IAVAVLCTLMGLLSALENVAVLYLIL) threads the bilayer. The Cytoplasmic segment spans residues 60-71 (SSQRLRRKPSYL). The chain crosses the membrane as a helical span at residues 72 to 92 (FIGSLAGADFLASVIFACNFV). Residues 93 to 104 (IFHVFHGVDSRN) are Extracellular-facing. The helical transmembrane segment at 105-129 (IFLLKIGSVTMTFTASVGSLLLTAV) threads the bilayer. At 130–149 (DRYLCLCYPPTYKALVTRGR) the chain is on the cytoplasmic side. The chain crosses the membrane as a helical span at residues 150–172 (ALVALGVMWVLSALISYLPLMGW). Residues 173–188 (TCCPSPCSELFPLIPN) lie on the Extracellular side of the membrane. The chain crosses the membrane as a helical span at residues 189-214 (DYLLGWLLFIAILFSGIIYTYGYVLW). Residues 215-246 (KAHQHVASLAEHQDRQVPGIARMRLDVRLAKT) lie on the Cytoplasmic side of the membrane. The helical transmembrane segment at 247–267 (LGLVMAVLLICWFPALALMGH) threads the bilayer. Topologically, residues 268 to 279 (SLVTTLSDKVKE) are extracellular. Residues 280–301 (AFAFCSMLCLVNSMINPIIYAL) form a helical membrane-spanning segment. At 302-360 (RSGEIRSAAQHCLTGWKKYLQGLGSEGKEEAPKSSVTETEAEVKTTTGPGSRTPGCSNC) the chain is on the cytoplasmic side. A disordered region spans residues 327-360 (EGKEEAPKSSVTETEAEVKTTTGPGSRTPGCSNC). Serine 335 and serine 336 each carry phosphoserine. Residue threonine 338 is modified to Phosphothreonine. The segment covering 349–360 (GPGSRTPGCSNC) has biased composition (polar residues). Residue serine 352 is modified to Phosphoserine.

The protein belongs to the G-protein coupled receptor 1 family. Constitutively phosphorylated on Ser-352; phosphorylation increases cell internalization and desensitizes the receptor. In terms of tissue distribution, expressed in spleen and brain by neurons and glial cells (at protein level). Expressed in lung, testis and thymus but not in heart, liver or kidney. Expressed in cerebellum, cortex and brainstem.

It is found in the cell membrane. The protein localises to the cell projection. It localises to the dendrite. Its subcellular location is the perikaryon. Heterotrimeric G protein-coupled receptor for endocannabinoid 2-arachidonoylglycerol mediating inhibition of adenylate cyclase. May function in inflammatory response, nociceptive transmission and bone homeostasis. This is Cannabinoid receptor 2 (Cnr2) from Rattus norvegicus (Rat).